Here is an 801-residue protein sequence, read N- to C-terminus: Phenylalanine--tRNA ligase beta subunit (801 aa).

One can recognise a tRNA-binding domain in the interval A39–F153. The B5 domain maps to T406–T481. Residues D459, D465, E468, and E469 each coordinate Mg(2+). An FDX-ACB domain is found at T708 to R801.

It belongs to the phenylalanyl-tRNA synthetase beta subunit family. Type 1 subfamily. In terms of assembly, tetramer of two alpha and two beta subunits. Mg(2+) is required as a cofactor.

Its subcellular location is the cytoplasm. The catalysed reaction is tRNA(Phe) + L-phenylalanine + ATP = L-phenylalanyl-tRNA(Phe) + AMP + diphosphate + H(+). The protein is Phenylalanine--tRNA ligase beta subunit of Streptococcus pyogenes serotype M1.